The following is an 88-amino-acid chain: Large ribosomal subunit protein uL29 (88 aa).

It belongs to the universal ribosomal protein uL29 family.

The chain is Large ribosomal subunit protein uL29 (rpl29) from Sulfurisphaera tokodaii (strain DSM 16993 / JCM 10545 / NBRC 100140 / 7) (Sulfolobus tokodaii).